The sequence spans 185 residues: MSEHNPYGTMHATTIITVRKGGKVVMAGDGQVSLGQTVMKGNARKVRRLSKGDVIAGFAGATADAFTLLERLEVKLEQYPDQLMRAAVELAKDWRTNKYLRNLEAMMLVADRSVTLAITGNGDVLEPEHGTIAIGSGGNYAFAAARALMDTDRSAEEIARRALEIAGDICVYTNHNVVLETLDAE.

Thr13 is an active-site residue. Residues Gly167, Cys170, and Thr173 each coordinate Na(+).

Belongs to the peptidase T1B family. HslV subfamily. In terms of assembly, a double ring-shaped homohexamer of HslV is capped on each side by a ring-shaped HslU homohexamer. The assembly of the HslU/HslV complex is dependent on binding of ATP.

The protein resides in the cytoplasm. The catalysed reaction is ATP-dependent cleavage of peptide bonds with broad specificity.. Allosterically activated by HslU binding. In terms of biological role, protease subunit of a proteasome-like degradation complex believed to be a general protein degrading machinery. This Sinorhizobium medicae (strain WSM419) (Ensifer medicae) protein is ATP-dependent protease subunit HslV.